We begin with the raw amino-acid sequence, 257 residues long: Enterotoxin type E (257 aa).

The N-terminal stretch at 1-27 is a signal peptide; that stretch reads MKKTAFILLLFIALTLTTSPLVNGSEK. A disulfide bond links Cys120 and Cys130. 3 residues coordinate Zn(2+): His211, His249, and Asp251.

The protein belongs to the staphylococcal/streptococcal toxin family. Interacts with host MHC class II molecules composed of alpha/HLA-DRA and beta/HLA-DRB1 chains. Interacts with host T-cell receptor beta variable TRBV7-9. Zn(2+) is required as a cofactor.

It localises to the secreted. Its function is as follows. Staphylococcal enterotoxin that activates the host immune system by binding as unprocessed molecules to major histocompatibility (MHC) complex class II and T-cell receptor (TCR) molecules. In turn, this ternary complex activates a large number of T-lymphocytes initiating a systemic release of pro-inflammatory cytokines. Also causes the intoxication staphylococcal food poisoning syndrome. The polypeptide is Enterotoxin type E (entE) (Staphylococcus aureus).